Here is a 173-residue protein sequence, read N- to C-terminus: Mesencephalic astrocyte-derived neurotrophic factor homolog (173 aa).

An N-terminal signal peptide occupies residues 1-22 (MNTSHIVLMICFIVGVGQTALA). Cystine bridges form between C28–C114, C31–C103, C61–C72, and C148–C151.

This sequence belongs to the ARMET family.

The protein resides in the secreted. In terms of biological role, required during the maturation of the embryonic nervous system for maintenance of neuronal and cuticular connectivity. Essential for maintenance of dopaminergic neurons and dopamine levels. The chain is Mesencephalic astrocyte-derived neurotrophic factor homolog from Drosophila virilis (Fruit fly).